The primary structure comprises 238 residues: 3-dehydroquinate dehydratase (238 aa).

Residues 35-37 (ELR) and Arg70 contribute to the 3-dehydroquinate site. His133 acts as the Proton donor/acceptor in catalysis. The active-site Schiff-base intermediate with substrate is the Lys160. Positions 202 and 225 each coordinate 3-dehydroquinate.

The protein belongs to the type-I 3-dehydroquinase family. As to quaternary structure, homodimer.

It catalyses the reaction 3-dehydroquinate = 3-dehydroshikimate + H2O. Its pathway is metabolic intermediate biosynthesis; chorismate biosynthesis; chorismate from D-erythrose 4-phosphate and phosphoenolpyruvate: step 3/7. In terms of biological role, involved in the third step of the chorismate pathway, which leads to the biosynthesis of aromatic amino acids. Catalyzes the cis-dehydration of 3-dehydroquinate (DHQ) and introduces the first double bond of the aromatic ring to yield 3-dehydroshikimate. This Staphylococcus aureus (strain USA300) protein is 3-dehydroquinate dehydratase.